Here is a 127-residue protein sequence, read N- to C-terminus: Aspartate 1-decarboxylase (127 aa).

Serine 25 acts as the Schiff-base intermediate with substrate; via pyruvic acid in catalysis. A Pyruvic acid (Ser) modification is found at serine 25. Threonine 57 is a binding site for substrate. Residue tyrosine 58 is the Proton donor of the active site. Residue 73–75 participates in substrate binding; it reads GAA.

Belongs to the PanD family. As to quaternary structure, heterooctamer of four alpha and four beta subunits. Requires pyruvate as cofactor. In terms of processing, is synthesized initially as an inactive proenzyme, which is activated by self-cleavage at a specific serine bond to produce a beta-subunit with a hydroxyl group at its C-terminus and an alpha-subunit with a pyruvoyl group at its N-terminus.

The protein resides in the cytoplasm. The enzyme catalyses L-aspartate + H(+) = beta-alanine + CO2. It functions in the pathway cofactor biosynthesis; (R)-pantothenate biosynthesis; beta-alanine from L-aspartate: step 1/1. Catalyzes the pyruvoyl-dependent decarboxylation of aspartate to produce beta-alanine. The sequence is that of Aspartate 1-decarboxylase from Listeria welshimeri serovar 6b (strain ATCC 35897 / DSM 20650 / CCUG 15529 / CIP 8149 / NCTC 11857 / SLCC 5334 / V8).